The sequence spans 385 residues: Deoxyhypusine synthase (385 aa).

NAD(+) contacts are provided by residues 108–112 (SNLIS), 134–136 (TAG), glutamate 140, and aspartate 257. A spermidine-binding site is contributed by 139–140 (EE). Aspartate 262 serves as a coordination point for spermidine. Glycine 304 is a binding site for NAD(+). Spermidine is bound at residue histidine 309. 329–330 (TG) is an NAD(+) binding site. Spermidine contacts are provided by residues 335–337 (GSD) and 344–350 (EAVSWGK). The Nucleophile role is filled by lysine 350. 363 to 364 (DV) contributes to the NAD(+) binding site.

This sequence belongs to the deoxyhypusine synthase family. The cofactor is NAD(+).

It catalyses the reaction [eIF5A protein]-L-lysine + spermidine = [eIF5A protein]-deoxyhypusine + propane-1,3-diamine. Its pathway is protein modification; eIF5A hypusination. In terms of biological role, catalyzes the NAD-dependent oxidative cleavage of spermidine and the subsequent transfer of the butylamine moiety of spermidine to the epsilon-amino group of a specific lysine residue of the eIF-5A precursor protein to form the intermediate deoxyhypusine residue. In Candida glabrata (strain ATCC 2001 / BCRC 20586 / JCM 3761 / NBRC 0622 / NRRL Y-65 / CBS 138) (Yeast), this protein is Deoxyhypusine synthase (DYS1).